An 828-amino-acid chain; its full sequence is Periplasmic nitrate reductase (828 aa).

Residues 1–31 constitute a signal peptide (tat-type signal); sequence MKLSRRHFMKANAVAAAAAVAGITIPIAVRA. Residues 39–95 form the 4Fe-4S Mo/W bis-MGD-type domain; the sequence is IHWDKAPCRFCGVGCGVLVGTQNGRIVASQGDPEAPVNRGLNCIKGYFLPKIMYGQD. 4 residues coordinate [4Fe-4S] cluster: Cys-46, Cys-49, Cys-53, and Cys-81. Residues Lys-83, Gln-150, Asn-175, Cys-179, 212–219, 243–247, 262–264, Met-372, Gln-376, Asn-482, 508–509, Lys-531, Asp-558, and 718–727 each bind Mo-bis(molybdopterin guanine dinucleotide); these read WGSNMAEM, STYQH, QTD, SD, and TGRVLEHWHT. Substrate is bound at residue Phe-794. The Mo-bis(molybdopterin guanine dinucleotide) site is built by Asn-802 and Lys-819.

It belongs to the prokaryotic molybdopterin-containing oxidoreductase family. NasA/NapA/NarB subfamily. As to quaternary structure, component of the periplasmic nitrate reductase NapAB complex composed of NapA and NapB. [4Fe-4S] cluster serves as cofactor. Mo-bis(molybdopterin guanine dinucleotide) is required as a cofactor. Predicted to be exported by the Tat system. The position of the signal peptide cleavage has not been experimentally proven.

It localises to the periplasm. It carries out the reaction 2 Fe(II)-[cytochrome] + nitrate + 2 H(+) = 2 Fe(III)-[cytochrome] + nitrite + H2O. Its function is as follows. Catalytic subunit of the periplasmic nitrate reductase complex NapAB. Receives electrons from NapB and catalyzes the reduction of nitrate to nitrite. The polypeptide is Periplasmic nitrate reductase (Pectobacterium atrosepticum (strain SCRI 1043 / ATCC BAA-672) (Erwinia carotovora subsp. atroseptica)).